A 184-amino-acid chain; its full sequence is ATP synthase subunit delta (184 aa).

Belongs to the ATPase delta chain family. In terms of assembly, F-type ATPases have 2 components, F(1) - the catalytic core - and F(0) - the membrane proton channel. F(1) has five subunits: alpha(3), beta(3), gamma(1), delta(1), epsilon(1). F(0) has three main subunits: a(1), b(2) and c(10-14). The alpha and beta chains form an alternating ring which encloses part of the gamma chain. F(1) is attached to F(0) by a central stalk formed by the gamma and epsilon chains, while a peripheral stalk is formed by the delta and b chains.

The protein localises to the cell inner membrane. Functionally, f(1)F(0) ATP synthase produces ATP from ADP in the presence of a proton or sodium gradient. F-type ATPases consist of two structural domains, F(1) containing the extramembraneous catalytic core and F(0) containing the membrane proton channel, linked together by a central stalk and a peripheral stalk. During catalysis, ATP synthesis in the catalytic domain of F(1) is coupled via a rotary mechanism of the central stalk subunits to proton translocation. Its function is as follows. This protein is part of the stalk that links CF(0) to CF(1). It either transmits conformational changes from CF(0) to CF(1) or is implicated in proton conduction. The sequence is that of ATP synthase subunit delta from Rhizorhabdus wittichii (strain DSM 6014 / CCUG 31198 / JCM 15750 / NBRC 105917 / EY 4224 / RW1) (Sphingomonas wittichii).